The primary structure comprises 174 residues: Cathepsin B-like cysteine proteinase 3 (174 aa).

Disulfide bonds link Cys22/Cys55 and Cys30/Cys42. Catalysis depends on residues His122 and Asn142.

The protein belongs to the peptidase C1 family.

Its function is as follows. Expression of the protease correlates with blood-feeding and suggests a role for the protease in blood digestion. This Ostertagia ostertagi (Brown stomach worm) protein is Cathepsin B-like cysteine proteinase 3 (CP-3).